Reading from the N-terminus, the 459-residue chain is Nuclear hormone receptor family member nhr-11 (459 aa).

A DNA-binding region (nuclear receptor) is located at residues Gly2–Ser81. 2 NR C4-type zinc fingers span residues Cys5 to Cys26 and Cys42 to Cys69. Disordered regions lie at residues Arg90–Asp119 and Asp134–Asp162. Over residues Asn97–Pro115 the composition is skewed to low complexity. The 271-residue stretch at Glu188–Gln458 folds into the NR LBD domain.

This sequence belongs to the nuclear hormone receptor family.

The protein resides in the nucleus. Its function is as follows. Orphan nuclear receptor. The protein is Nuclear hormone receptor family member nhr-11 (nhr-11) of Caenorhabditis elegans.